A 277-amino-acid polypeptide reads, in one-letter code: Putative phosphoenolpyruvate synthase regulatory protein (277 aa).

157 to 164 (GVSRCGKT) lines the ADP pocket.

It belongs to the pyruvate, phosphate/water dikinase regulatory protein family. PSRP subfamily.

It catalyses the reaction [pyruvate, water dikinase] + ADP = [pyruvate, water dikinase]-phosphate + AMP + H(+). The catalysed reaction is [pyruvate, water dikinase]-phosphate + phosphate + H(+) = [pyruvate, water dikinase] + diphosphate. Bifunctional serine/threonine kinase and phosphorylase involved in the regulation of the phosphoenolpyruvate synthase (PEPS) by catalyzing its phosphorylation/dephosphorylation. This chain is Putative phosphoenolpyruvate synthase regulatory protein, found in Erwinia tasmaniensis (strain DSM 17950 / CFBP 7177 / CIP 109463 / NCPPB 4357 / Et1/99).